The following is an 879-amino-acid chain: Serine/threonine-protein kinase greatwall (879 aa).

The residue at position 1 (Met-1) is an N-acetylmethionine. A disordered region spans residues 1–23 (MDPTAGSKKEPGGGAATEEGVNR). Positions 35-835 (FSIVKPISRG…MKELKRHPLF (801 aa)) constitute a Protein kinase domain. ATP is bound by residues 41–49 (ISRGAFGKV) and Lys-62. Asp-156 serves as the catalytic Proton acceptor. Phosphothreonine is present on residues Thr-207 and Thr-222. A phosphoserine mark is found at Ser-293, Ser-370, and Ser-453. Thr-519 is subject to Phosphothreonine. Phosphoserine occurs at positions 552 and 556. Positions 566–632 (SMNSDSSFPG…VENPAVQESN (67 aa)) are disordered. Over residues 589 to 598 (DSDRSIKESS) the composition is skewed to basic and acidic residues. Residues Ser-631, Ser-657, and Ser-668 each carry the phosphoserine modification. The tract at residues 700-728 (KRRSCMPHQQTPNQIKSGTPYRTPKSVRR) is disordered. Residues 706–716 (PHQQTPNQIKS) show a composition bias toward polar residues. Residue Thr-722 is modified to Phosphothreonine. Ser-725 carries the post-translational modification Phosphoserine. A Phosphothreonine modification is found at Thr-741. The region spanning 836-879 (SDVDWENLQHQTMPFIPQPDDETDTSYFEARNTAQHLTVSGFSL) is the AGC-kinase C-terminal domain. Phosphoserine occurs at positions 875 and 878.

Belongs to the protein kinase superfamily. AGC Ser/Thr protein kinase family. Post-translationally, phosphorylation at Thr-741 by CDK1 during M phase activates its kinase activity. Maximum phosphorylation occurs in prometaphase.

The protein localises to the cytoplasm. It is found in the cytoskeleton. It localises to the microtubule organizing center. The protein resides in the centrosome. Its subcellular location is the nucleus. The protein localises to the cleavage furrow. It catalyses the reaction L-seryl-[protein] + ATP = O-phospho-L-seryl-[protein] + ADP + H(+). It carries out the reaction L-threonyl-[protein] + ATP = O-phospho-L-threonyl-[protein] + ADP + H(+). In terms of biological role, serine/threonine kinase that plays a key role in M phase by acting as a regulator of mitosis entry and maintenance. Acts by promoting the inactivation of protein phosphatase 2A (PP2A) during M phase: does not directly inhibit PP2A but acts by mediating phosphorylation and subsequent activation of ARPP19 and ENSA at 'Ser-62' and 'Ser-67', respectively. ARPP19 and ENSA are phosphatase inhibitors that specifically inhibit the PPP2R2D (PR55-delta) subunit of PP2A. Inactivation of PP2A during M phase is essential to keep cyclin-B1-CDK1 activity high. Following DNA damage, it is also involved in checkpoint recovery by being inhibited. Phosphorylates histone protein in vitro; however such activity is unsure in vivo. May be involved in megakaryocyte differentiation. The sequence is that of Serine/threonine-protein kinase greatwall (MASTL) from Homo sapiens (Human).